We begin with the raw amino-acid sequence, 405 residues long: MSPIEKSSKLENVCYDIRGPVLKEAKRLEEEGNKVLKLNIGNPAPFGFDAPDEILVDVIRNLPTAQGYCDSKGLYSARKAIMQHYQARGMRDVTVEDIYIGNGVSELIVQAMQALLNSGDEMLVPAPDYPLWTAAVSLSSGKAVHYLCDESSDWFPDLDDIRAKITPRTRGIVIINPNNPTGAVYSKELLMEIVEIARQHNLIIFADEIYDKILYDDAEHHSIAPLAPDLLTITFNGLSKTYRVAGFRQGWMVLNGPKKHAKGYIEGLEMLASMRLCANVPAQHAIQTALGGYQSISEFITPGGRLYEQRNRAWELINDIPGVSCVKPRGALYMFPKIDAKRFNIHDDQKMVLDFLLQEKVLLVQGTAFNWPWPDHFRIVTLPRVDDIELSLSKFARFLSGYHQL.

Residues Gly-41 and Asn-179 each contribute to the L-alanine site. Lys-240 bears the N6-(pyridoxal phosphate)lysine mark. Arg-378 is an L-alanine binding site.

This sequence belongs to the class-I pyridoxal-phosphate-dependent aminotransferase family. In terms of assembly, homodimer. The cofactor is pyridoxal 5'-phosphate.

It localises to the cytoplasm. It catalyses the reaction L-alanine + 2-oxoglutarate = pyruvate + L-glutamate. The protein operates within amino-acid biosynthesis; L-alanine biosynthesis. Its function is as follows. Involved in the biosynthesis of alanine. Catalyzes the transamination of pyruvate by glutamate, leading to the formation of L-alanine and 2-oxoglutarate. Is also able to catalyze the reverse reaction. This Escherichia coli (strain K12) protein is Glutamate-pyruvate aminotransferase AlaA.